A 255-amino-acid chain; its full sequence is Triosephosphate isomerase (255 aa).

A substrate-binding site is contributed by 9–11 (NWK). His-95 acts as the Electrophile in catalysis. The active-site Proton acceptor is the Glu-167. Substrate contacts are provided by residues Gly-173, Ser-212, and 233–234 (GG).

It belongs to the triosephosphate isomerase family. In terms of assembly, homodimer.

It localises to the cytoplasm. It catalyses the reaction D-glyceraldehyde 3-phosphate = dihydroxyacetone phosphate. It participates in carbohydrate biosynthesis; gluconeogenesis. It functions in the pathway carbohydrate degradation; glycolysis; D-glyceraldehyde 3-phosphate from glycerone phosphate: step 1/1. Functionally, involved in the gluconeogenesis. Catalyzes stereospecifically the conversion of dihydroxyacetone phosphate (DHAP) to D-glyceraldehyde-3-phosphate (G3P). The protein is Triosephosphate isomerase of Serratia proteamaculans (strain 568).